Reading from the N-terminus, the 356-residue chain is Uroporphyrinogen decarboxylase (356 aa).

Substrate contacts are provided by residues 27–31, Asp77, Tyr154, Thr209, and His327; that span reads RQAGR.

It belongs to the uroporphyrinogen decarboxylase family. In terms of assembly, homodimer.

Its subcellular location is the cytoplasm. The enzyme catalyses uroporphyrinogen III + 4 H(+) = coproporphyrinogen III + 4 CO2. It participates in porphyrin-containing compound metabolism; protoporphyrin-IX biosynthesis; coproporphyrinogen-III from 5-aminolevulinate: step 4/4. Functionally, catalyzes the decarboxylation of four acetate groups of uroporphyrinogen-III to yield coproporphyrinogen-III. This chain is Uroporphyrinogen decarboxylase, found in Hahella chejuensis (strain KCTC 2396).